The sequence spans 338 residues: Mycothiol acetyltransferase (338 aa).

2 N-acetyltransferase domains span residues 29–173 and 181–338; these read PETY…HQLP and ISLR…NKFQ. Aspartate 55 lines the 1D-myo-inositol 2-(L-cysteinylamino)-2-deoxy-alpha-D-glucopyranoside pocket. Residue 105 to 107 participates in acetyl-CoA binding; sequence LVV. The 1D-myo-inositol 2-(L-cysteinylamino)-2-deoxy-alpha-D-glucopyranoside site is built by glutamate 208, lysine 248, and glutamate 261. Acetyl-CoA is bound by residues 265-267 and 272-278; these read VGI and QGKGLGK. Tyrosine 299 provides a ligand contact to 1D-myo-inositol 2-(L-cysteinylamino)-2-deoxy-alpha-D-glucopyranoside.

The protein belongs to the acetyltransferase family. MshD subfamily. As to quaternary structure, monomer.

The enzyme catalyses 1D-myo-inositol 2-(L-cysteinylamino)-2-deoxy-alpha-D-glucopyranoside + acetyl-CoA = mycothiol + CoA + H(+). Its function is as follows. Catalyzes the transfer of acetyl from acetyl-CoA to desacetylmycothiol (Cys-GlcN-Ins) to form mycothiol. This Renibacterium salmoninarum (strain ATCC 33209 / DSM 20767 / JCM 11484 / NBRC 15589 / NCIMB 2235) protein is Mycothiol acetyltransferase.